Reading from the N-terminus, the 258-residue chain is MLILISPAKTLDYQSPLTTTRYTLPELLDNSQQLIHEARKLTPPQISTLMRISDKLAGINAARFHDWQPDFTPANARQAILAFKGDVYTGLQAETFSEDDFDFAQQHLRMLSGLYGVLRPLDLMQPYRLEMGIRLENARGKDLYQFWGDIITNKLNEALAAQGDNVVINLASDEYFKSVKPKKLNAEIIKPVFLDEKNGKFKIISFYAKKARGLMSRFIIENRLTKPEQLTGFNSEGYFFDEASSSNGELVFKRYEQR.

It belongs to the UPF0246 family.

The protein is UPF0246 protein YaaA of Shigella boydii serotype 18 (strain CDC 3083-94 / BS512).